The primary structure comprises 141 residues: Large ribosomal subunit protein uL11 (141 aa).

The protein belongs to the universal ribosomal protein uL11 family. As to quaternary structure, part of the ribosomal stalk of the 50S ribosomal subunit. Interacts with L10 and the large rRNA to form the base of the stalk. L10 forms an elongated spine to which L12 dimers bind in a sequential fashion forming a multimeric L10(L12)X complex. In terms of processing, one or more lysine residues are methylated.

Forms part of the ribosomal stalk which helps the ribosome interact with GTP-bound translation factors. The protein is Large ribosomal subunit protein uL11 of Opitutus terrae (strain DSM 11246 / JCM 15787 / PB90-1).